The following is a 72-amino-acid chain: High-potential iron-sulfur protein isozyme 1 (72 aa).

N-carbamoylalanine; partial is present on Ala1. Residues Cys34, Cys37, Cys51, and Cys65 each coordinate [4Fe-4S] cluster.

This sequence belongs to the high-potential iron-sulfur protein (HiPIP) family. In terms of assembly, homodimer.

In terms of biological role, specific class of high-redox-potential 4Fe-4S ferredoxins. Functions in anaerobic electron transport in most purple and in some other photosynthetic bacteria and in at least one genus (Paracoccus) of halophilic, denitrifying bacteria. The chain is High-potential iron-sulfur protein isozyme 1 from Ectothiorhodospira mobilis.